Consider the following 387-residue polypeptide: Eukaryotic translation initiation factor 3 subunit M (387 aa).

A PCI domain is found at L181–H340.

The protein belongs to the eIF-3 subunit M family. Component of the eukaryotic translation initiation factor 3 (eIF-3) complex. The eIF-3 complex interacts with pix.

The protein localises to the cytoplasm. Its subcellular location is the golgi apparatus. Its function is as follows. Component of the eukaryotic translation initiation factor 3 (eIF-3) complex, which is involved in protein synthesis of a specialized repertoire of mRNAs and, together with other initiation factors, stimulates binding of mRNA and methionyl-tRNAi to the 40S ribosome. The eIF-3 complex specifically targets and initiates translation of a subset of mRNAs involved in cell proliferation. This chain is Eukaryotic translation initiation factor 3 subunit M, found in Drosophila erecta (Fruit fly).